Reading from the N-terminus, the 1557-residue chain is DVA-1 polyprotein (1557 aa).

The N-terminal stretch at 1 to 21 (MKSTSFITLLLLSYFIVEAHS) is a signal peptide. Positions 22-60 (SIFHWDDERLFKHDDTHSWLTDVQKAELETLKHQPIQLR) are excised as a propeptide. A glycan (N-linked (GlcNAc...) asparagine) is linked at Asn997.

This sequence belongs to the NPA family. Post-translationally, nematode polyprotein allergens (NPAs) are synthesized as large polypeptides that are subsequently proteolytically cleaved to active polypeptide units.

Its function is as follows. Has high binding affinity for fatty acids and retinoids. This Dictyocaulus viviparus (Bovine lungworm) protein is DVA-1 polyprotein (DVA-1).